Reading from the N-terminus, the 159-residue chain is Eukaryotic translation initiation factor 5A-2 (159 aa).

The segment covering 1–10 has biased composition (basic and acidic residues); the sequence is MSDEEHHFEP. A disordered region spans residues 1–21; that stretch reads MSDEEHHFEPAADAGASKTYP. A Hypusine modification is found at Lys52.

Belongs to the eIF-5A family. In terms of processing, lys-52 undergoes hypusination, a unique post-translational modification that consists in the addition of a butylamino group from spermidine to lysine side chain, leading to the formation of the unusual amino acid hypusine. eIF-5As are the only known proteins to undergo this modification, which is essential for their function.

In terms of biological role, translation factor that promotes translation elongation and termination, particularly upon ribosome stalling at specific amino acid sequence contexts. Binds between the exit (E) and peptidyl (P) site of the ribosome and promotes rescue of stalled ribosome: specifically required for efficient translation of polyproline-containing peptides as well as other motifs that stall the ribosome. Acts as a ribosome quality control (RQC) cofactor by joining the RQC complex to facilitate peptidyl transfer during CAT tailing step. The polypeptide is Eukaryotic translation initiation factor 5A-2 (Medicago sativa (Alfalfa)).